We begin with the raw amino-acid sequence, 239 residues long: Geranylgeranylglyceryl phosphate synthase (239 aa).

Lys13 lines the sn-glycerol 1-phosphate pocket. The Mg(2+) site is built by Asp15 and Thr42. Sn-glycerol 1-phosphate is bound by residues 162–167, Gly192, and 212–213; these read YIEYSG and GD.

Belongs to the GGGP/HepGP synthase family. Group I subfamily. Requires Mg(2+) as cofactor.

It localises to the cytoplasm. The enzyme catalyses sn-glycerol 1-phosphate + (2E,6E,10E)-geranylgeranyl diphosphate = sn-3-O-(geranylgeranyl)glycerol 1-phosphate + diphosphate. Its pathway is membrane lipid metabolism; glycerophospholipid metabolism. Its function is as follows. Prenyltransferase that catalyzes the transfer of the geranylgeranyl moiety of geranylgeranyl diphosphate (GGPP) to the C3 hydroxyl of sn-glycerol-1-phosphate (G1P). This reaction is the first ether-bond-formation step in the biosynthesis of archaeal membrane lipids. This Haloquadratum walsbyi (strain DSM 16790 / HBSQ001) protein is Geranylgeranylglyceryl phosphate synthase.